Reading from the N-terminus, the 429-residue chain is 46 kDa membrane protein (429 aa).

The next 9 membrane-spanning stretches (helical) occupy residues 26-46, 51-71, 99-119, 173-193, 224-244, 279-299, 315-335, 360-380, and 407-427; these read AALT…EDVF, TGID…VSVL, LVLV…VLLI, FLIH…ALLP, LLIK…AHPV, TLLF…TDVV, LLTV…IDNI, ILWW…AVGA, and IAVT…RYLV.

This sequence belongs to the CitM (TC 2.A.11) transporter family.

It is found in the cell membrane. The sequence is that of 46 kDa membrane protein (ag45) from Mycobacterium leprae (strain TN).